The following is a 243-amino-acid chain: Protein Thf1 (243 aa).

A coiled-coil region spans residues 180 to 224 (SKARVEKDLNLYKSNLEKMAQAVELTEQILESERRKREQNESAKL). The segment covering 210-220 (ESERRKREQNE) has biased composition (basic and acidic residues). The interval 210-243 (ESERRKREQNESAKLNTGSSEQMSQGVEACSNIS) is disordered. The span at 221 to 243 (SAKLNTGSSEQMSQGVEACSNIS) shows a compositional bias: polar residues.

The protein belongs to the THF1 family.

May be involved in photosynthetic membrane biogenesis. In Prochlorococcus marinus (strain MIT 9313), this protein is Protein Thf1.